The chain runs to 78 residues: U7-lycotoxin-Ls1d (78 aa).

The first 22 residues, 1–22 (MKLIIFTGLALLLIVSLIDVEA), serve as a signal peptide directing secretion. The propeptide occupies 23 to 26 (QNEG).

This sequence belongs to the neurotoxin 19 (CSTX) family. 07 (U7-Lctx) subfamily. Post-translationally, contains 4 disulfide bonds. Expressed by the venom gland.

The protein localises to the secreted. This chain is U7-lycotoxin-Ls1d, found in Lycosa singoriensis (Wolf spider).